The chain runs to 128 residues: MNVPENLMYTKNHEWIKVDGDTALVGVTDYAQKELGDIVFVELPEVSDEFAQSEGFAVLESVKAVSDVYLPVGGEVLEANEELLENPELVNQEPYASGWLVKIKLADKKELEDLMSSEEYARYLEEVE.

Residues 22–104 form the Lipoyl-binding domain; it reads TALVGVTDYA…YASGWLVKIK (83 aa). At K63 the chain carries N6-lipoyllysine.

It belongs to the GcvH family. In terms of assembly, the glycine cleavage system is composed of four proteins: P, T, L and H. (R)-lipoate is required as a cofactor.

In terms of biological role, the glycine cleavage system catalyzes the degradation of glycine. The H protein shuttles the methylamine group of glycine from the P protein to the T protein. The protein is Glycine cleavage system H protein of Halothermothrix orenii (strain H 168 / OCM 544 / DSM 9562).